The chain runs to 552 residues: MTSLREFRKLCCAIYHASGYKEKSKLIRDFITDRDDKYLIIKLLLPGLDDRIYNMNDKQIIKIYSIIFKQSQKDMLQDLGYGYIGDTISTFFKENTEIRPRNKSILTLEDVDSFLTTLSSITKESHQIKLLTDIASVCTCNDLKCVVMLIDKDLKIKAGPRYVLNAISPHAYDVFRKSNNLKEIIENESKQNLDSISVSVMTPINPMLAESCDSVNKAFKKFPSGMFAEVKYDGERVQVHKNNNEFAFFSRNMKPVLSYKVDYLKEYIPKAFKKATSIVLDSEIVLVDEHNVQLPFGSLGIHKKKEYKNSNMCLFVFDCLYFDGFDMTDIPLYKRRSFLKDVMVEIPNRIVFSELTNISNESQLTDVLDDALTRKLEGLVLKDINGVYEPGKRRWLKIKRDYLNEGSMADSADLVVLGAYYGKGAKGGIMAVFLMGCYDDESGKWKTVTKCSGHDDNTLRVLQDQLTMVKINKDPKKIPEWLVVNKIYIPDFVVEDPKQSQIWEISGAEFTSSKSHTANGISIRFPRFTRIREDKTWKESTHLNDLVNLTKS.

Glutamate 229 provides a ligand contact to ATP. Lysine 231 serves as the catalytic N6-AMP-lysine intermediate. Residues arginine 236 and glutamate 283 each contribute to the ATP site. Mg(2+) is bound by residues glutamate 283 and glutamate 377. ATP-binding residues include lysine 382 and lysine 397.

The protein belongs to the ATP-dependent DNA ligase family. In terms of assembly, interacts with host TOP2A and TOP2B. Mg(2+) is required as a cofactor.

It is found in the host cytoplasm. It carries out the reaction ATP + (deoxyribonucleotide)n-3'-hydroxyl + 5'-phospho-(deoxyribonucleotide)m = (deoxyribonucleotide)n+m + AMP + diphosphate.. Functionally, DNA ligase that seals nicks in double-stranded DNA during DNA replication, DNA recombination and DNA repair. Recruits cellular topoisomerase II to sites of viral replication and assembly. The protein is DNA ligase (OPG180) of Homo sapiens (Human).